The chain runs to 187 residues: GTP cyclohydrolase 1 (187 aa).

3 residues coordinate Zn(2+): cysteine 81, histidine 84, and cysteine 152.

Belongs to the GTP cyclohydrolase I family. Toroid-shaped homodecamer, composed of two pentamers of five dimers.

The enzyme catalyses GTP + H2O = 7,8-dihydroneopterin 3'-triphosphate + formate + H(+). It participates in cofactor biosynthesis; 7,8-dihydroneopterin triphosphate biosynthesis; 7,8-dihydroneopterin triphosphate from GTP: step 1/1. In Pyrobaculum aerophilum (strain ATCC 51768 / DSM 7523 / JCM 9630 / CIP 104966 / NBRC 100827 / IM2), this protein is GTP cyclohydrolase 1.